The following is a 267-amino-acid chain: 3-methyl-2-oxobutanoate hydroxymethyltransferase (267 aa).

Residues Asp-41 and Asp-80 each coordinate Mg(2+). 3-methyl-2-oxobutanoate is bound by residues 41-42, Asp-80, and Lys-109; that span reads DS. Residue Glu-111 coordinates Mg(2+). Glu-178 serves as the catalytic Proton acceptor.

It belongs to the PanB family. Homodecamer; pentamer of dimers. Requires Mg(2+) as cofactor.

It localises to the cytoplasm. It catalyses the reaction 3-methyl-2-oxobutanoate + (6R)-5,10-methylene-5,6,7,8-tetrahydrofolate + H2O = 2-dehydropantoate + (6S)-5,6,7,8-tetrahydrofolate. It functions in the pathway cofactor biosynthesis; (R)-pantothenate biosynthesis; (R)-pantoate from 3-methyl-2-oxobutanoate: step 1/2. Catalyzes the reversible reaction in which hydroxymethyl group from 5,10-methylenetetrahydrofolate is transferred onto alpha-ketoisovalerate to form ketopantoate. This Kosmotoga olearia (strain ATCC BAA-1733 / DSM 21960 / TBF 19.5.1) protein is 3-methyl-2-oxobutanoate hydroxymethyltransferase.